The primary structure comprises 191 residues: Fe/S biogenesis protein NfuA (191 aa).

Residues C149 and C152 each contribute to the [4Fe-4S] cluster site.

The protein belongs to the NfuA family. In terms of assembly, homodimer. [4Fe-4S] cluster serves as cofactor.

Involved in iron-sulfur cluster biogenesis. Binds a 4Fe-4S cluster, can transfer this cluster to apoproteins, and thereby intervenes in the maturation of Fe/S proteins. Could also act as a scaffold/chaperone for damaged Fe/S proteins. The polypeptide is Fe/S biogenesis protein NfuA (Buchnera aphidicola subsp. Baizongia pistaciae (strain Bp)).